Reading from the N-terminus, the 352-residue chain is Chymopapain (352 aa).

The first 18 residues, 1 to 18 (MATMSSISKIIFLATCLI), serve as a signal peptide directing secretion. Positions 19–134 (IHMGLSSADF…EDFTYKHVTN (116 aa)) are cleaved as a propeptide — activation peptide. N-linked (GlcNAc...) asparagine glycosylation is present at N86. Cystine bridges form between C156–C197, C190–C229, and C287–C338. C159 is an active-site residue. Active-site residues include H293 and N313.

This sequence belongs to the peptidase C1 family.

The enzyme catalyses Specificity similar to that of papain.. Its function is as follows. Cysteine proteinase with a high level of diversity in substrate specificity. This is Chymopapain from Carica papaya (Papaya).